The chain runs to 502 residues: Putative ZDHHC-type palmitoyltransferase 3 (502 aa).

Residues M1–L80 form a disordered region. Basic and acidic residues predominate over residues K10–E30. The segment covering N31–Y52 has biased composition (low complexity). Residue N58 is glycosylated (N-linked (GlcNAc...) asparagine). Residues D59–T73 are compositionally biased toward acidic residues. 2 consecutive transmembrane segments (helical) span residues F104–V124 and L134–Y154. Residues I200–Q281 form a disordered region. Low complexity predominate over residues D203–F212. Over residues S213–E222 the composition is skewed to acidic residues. Residues N248 to N280 are compositionally biased toward low complexity. Residues N252 and N280 are each glycosylated (N-linked (GlcNAc...) asparagine). The 51-residue stretch at K299–T349 folds into the DHHC domain. C329 (S-palmitoyl cysteine intermediate) is an active-site residue. The chain crosses the membrane as a helical span at residues F344–V364. Residues N371, N388, and N393 are each glycosylated (N-linked (GlcNAc...) asparagine). The helical transmembrane segment at G419–V439 threads the bilayer. N-linked (GlcNAc...) asparagine glycans are attached at residues N449, N483, and N494.

It belongs to the DHHC palmitoyltransferase family.

It localises to the membrane. The catalysed reaction is L-cysteinyl-[protein] + hexadecanoyl-CoA = S-hexadecanoyl-L-cysteinyl-[protein] + CoA. In Dictyostelium discoideum (Social amoeba), this protein is Putative ZDHHC-type palmitoyltransferase 3.